The primary structure comprises 389 residues: G2/M cell-cycle inhibitor DR6 (389 aa).

It belongs to the Roseolovirus DR6 family.

Its subcellular location is the host nucleus. Inhibits the host G2/M cell-cycle progression in a p53-independent manner. This is G2/M cell-cycle inhibitor DR6 (DR6L) from Homo sapiens (Human).